The chain runs to 141 residues: Transcription antitermination protein NusB (141 aa).

It belongs to the NusB family.

Its function is as follows. Involved in transcription antitermination. Required for transcription of ribosomal RNA (rRNA) genes. Binds specifically to the boxA antiterminator sequence of the ribosomal RNA (rrn) operons. This Neisseria gonorrhoeae (strain ATCC 700825 / FA 1090) protein is Transcription antitermination protein NusB.